A 113-amino-acid polypeptide reads, in one-letter code: Photosystem II reaction center Psb28 protein (113 aa).

It belongs to the Psb28 family. Part of the photosystem II complex.

The protein resides in the cellular thylakoid membrane. The sequence is that of Photosystem II reaction center Psb28 protein from Nostoc punctiforme (strain ATCC 29133 / PCC 73102).